We begin with the raw amino-acid sequence, 164 residues long: Transcriptional repressor NrdR (164 aa).

A zinc finger lies at 3-34 (CPFCSAQDTKVIDSRLVADGVQIRRRRECLSC). Positions 49–139 (PRLVKTDGTR…VYRSFQDISE (91 aa)) constitute an ATP-cone domain.

Belongs to the NrdR family. Zn(2+) serves as cofactor.

Its function is as follows. Negatively regulates transcription of bacterial ribonucleotide reductase nrd genes and operons by binding to NrdR-boxes. This chain is Transcriptional repressor NrdR, found in Alcanivorax borkumensis (strain ATCC 700651 / DSM 11573 / NCIMB 13689 / SK2).